We begin with the raw amino-acid sequence, 349 residues long: MAFKIASSPHVTRNLHTSTVMQRVILCLLPGLVVQCAFFGWGTLVQVLLAILVALSCEAAVMKLRNRNIKASLSDNSAMLTAILIGVAIPPLAPWWMIVMGTAFAIVIVKHLYGGLGHNLFNPAMAAYVLLLVSFPVQMTTWIAPSTVALHSPSLVESLQLIFNVGAHVNMEQFRLGIDGMTMATPLDTLKTDLSMGLTTTESLTKAIFDGSTGVGWFWVNLAYLAGGLVLLKLKAIRWHISTGVLLGLFVASSIGFLLSPDTQASPLMHLFSGATMLAAFFIATDPVTAATSSRGRIIFGALIGVLVYIIRTKGGYPDAFAFAVLLANLCAPFIDYYVRPRTYGHSTS.

The next 3 helical transmembrane spans lie at 20–42 (VMQR…FGWG), 77–99 (SAML…WMIV), and 124–144 (AMAA…TWIA). At threonine 185 the chain carries FMN phosphoryl threonine. 5 helical membrane-spanning segments follow: residues 212 to 232 (STGV…LVLL), 239 to 259 (WHIS…GFLL), 265 to 285 (ASPL…FIAT), 291 to 311 (ATSS…VYII), and 315 to 335 (GGYP…APFI).

This sequence belongs to the NqrB/RnfD family. In terms of assembly, the complex is composed of six subunits: RnfA, RnfB, RnfC, RnfD, RnfE and RnfG. The cofactor is FMN.

Its subcellular location is the cell inner membrane. In terms of biological role, part of a membrane-bound complex that couples electron transfer with translocation of ions across the membrane. This is Ion-translocating oxidoreductase complex subunit D from Shewanella baltica (strain OS223).